We begin with the raw amino-acid sequence, 314 residues long: tRNA dimethylallyltransferase (314 aa).

40–47 (GPTASGKS) lines the ATP pocket. Position 42 to 47 (42 to 47 (TASGKS)) interacts with substrate.

It belongs to the IPP transferase family. In terms of assembly, monomer. Requires Mg(2+) as cofactor.

It catalyses the reaction adenosine(37) in tRNA + dimethylallyl diphosphate = N(6)-dimethylallyladenosine(37) in tRNA + diphosphate. Catalyzes the transfer of a dimethylallyl group onto the adenine at position 37 in tRNAs that read codons beginning with uridine, leading to the formation of N6-(dimethylallyl)adenosine (i(6)A). The protein is tRNA dimethylallyltransferase of Cereibacter sphaeroides (strain KD131 / KCTC 12085) (Rhodobacter sphaeroides).